Reading from the N-terminus, the 1023-residue chain is Sodium/potassium-transporting ATPase subunit alpha-1 (1023 aa).

Positions 1–5 (MGKGV) are excised as a propeptide. The span at 1 to 11 (MGKGVGRDKYE) shows a compositional bias: basic and acidic residues. A disordered region spans residues 1–39 (MGKGVGRDKYEPAAVSEHGDKKGKKAKKERDMDELKKEV). Over 6-96 (GRDKYEPAAV…PEWVKFCRQL (91 aa)) the chain is Cytoplasmic. Lys-9 is modified (N6-acetyllysine). A Phosphotyrosine modification is found at Tyr-10. Ser-16 carries the post-translational modification Phosphoserine. Residue Lys-21 is modified to N6-acetyllysine. The segment covering 28–39 (KERDMDELKKEV) has biased composition (basic and acidic residues). Residues Ser-40 and Ser-47 each carry the phosphoserine modification. The interval 82 to 84 (PPP) is phosphoinositide-3 kinase binding. A helical membrane pass occupies residues 97 to 117 (FGGFSMLLWIGAILCFLAYGI). The Extracellular segment spans residues 118 to 129 (RSATEEEPPNDD). The helical transmembrane segment at 130–150 (LYLGVVLSAVVIITGCFSYYQ) threads the bilayer. The Cytoplasmic segment spans residues 151 to 291 (EAKSSKIMES…TPIAEEIEHF (141 aa)). Residues 216–235 (SSLTGESEPQTRSPDFTNEN) are disordered. Ser-228 carries the post-translational modification Phosphoserine. A Phosphotyrosine modification is found at Tyr-260. Residues 292–312 (IHLITGVAVFLGVSFFILSLI) traverse the membrane as a helical segment. Residues 313–319 (LEYTWLE) are Extracellular-facing. Residues 320 to 340 (AVIFLIGIIVANVPEGLLATV) form a helical membrane-spanning segment. Topologically, residues 341–775 (TVCLTLTAKR…RLIFDNLKKS (435 aa)) are cytoplasmic. Asp-376 serves as the catalytic 4-aspartylphosphate intermediate. A phosphoserine mark is found at Ser-452 and Ser-484. Lys-487 is an ATP binding site. Tyr-542 carries the phosphotyrosine modification. A mediates interaction with SCN7A region spans residues 596-717 (RAAVPDAVGK…QGAIVAVTGD (122 aa)). Lys-661 is modified (N6-succinyllysine). 2 positions are modified to phosphoserine: Ser-668 and Ser-675. Mg(2+) is bound by residues Asp-717 and Asp-721. The helical transmembrane segment at 776-798 (IAYTLTSNIPEITPFLIFIIANI) threads the bilayer. The Extracellular segment spans residues 799-801 (PLP). A helical membrane pass occupies residues 802–824 (LGTVTILCIDLGTDMVPAISLAY). Residues 825–849 (EQAESDIMKRQPRNPKTDKLVNERL) are Cytoplasmic-facing. A helical membrane pass occupies residues 850–872 (ISMAYGQIGMIQALGGFFTYFVI). Over 873–915 (LAENGFLPFHLLGIRETWDDRWVNDVEDSYGQQWTYEQRKIVE) the chain is Extracellular. The chain crosses the membrane as a helical span at residues 916-936 (FTCHTAFFVSIVVVQWADLVI). Residues 937 to 952 (CKTRRNSVFQQGMKNK) lie on the Cytoplasmic side of the membrane. Phosphoserine; by PKA is present on Ser-943. The helical transmembrane segment at 953–973 (ILIFGLFEETALAAFLSYCPG) threads the bilayer. At 974-979 (MGAALR) the chain is on the extracellular side. Residues 980–1000 (MYPLKPTWWFCAFPYSLLIFV) traverse the membrane as a helical segment. At 1001-1023 (YDEVRKLIIRRRPGGWVEKETYY) the chain is on the cytoplasmic side.

It belongs to the cation transport ATPase (P-type) (TC 3.A.3) family. Type IIC subfamily. In terms of assembly, the sodium/potassium-transporting ATPase is composed of a catalytic alpha subunit, an auxiliary non-catalytic beta subunit and an additional regulatory subunit. Interacts with regulatory subunit FXYD1. Interacts with regulatory subunit FXYD3. Interacts with SIK1. Interacts with SLC35G1 and STIM1. Interacts with CLN3; this interaction regulates the sodium/potassium-transporting ATPase complex localization at the plasma membrane. Interacts with SCN7A; activates ATP1A1 P-type sodium:potassium-exchanging transporter activity which indirectly signals to nearby neurons to regulate sodium homeostasis. Post-translationally, phosphorylation on Tyr-10 modulates pumping activity. Phosphorylation of Ser-943 by PKA modulates the response of ATP1A1 to PKC. Dephosphorylation by protein phosphatase 2A (PP2A) following increases in intracellular sodium, leading to increase catalytic activity.

The protein resides in the cell membrane. It is found in the basolateral cell membrane. Its subcellular location is the sarcolemma. It localises to the cell projection. The protein localises to the axon. The protein resides in the melanosome. The enzyme catalyses K(+)(out) + Na(+)(in) + ATP + H2O = K(+)(in) + Na(+)(out) + ADP + phosphate + H(+). This is the catalytic component of the active enzyme, which catalyzes the hydrolysis of ATP coupled with the exchange of sodium and potassium ions across the plasma membrane. This action creates the electrochemical gradient of sodium and potassium ions, providing the energy for active transport of various nutrients. Could also be part of an osmosensory signaling pathway that senses body-fluid sodium levels and controls salt intake behavior as well as voluntary water intake to regulate sodium homeostasis. The polypeptide is Sodium/potassium-transporting ATPase subunit alpha-1 (Atp1a1) (Mus musculus (Mouse)).